The primary structure comprises 1088 residues: Calcium-transporting ATPase 5, plasma membrane-type (1088 aa).

The span at 1–11 (MESASSSLATS) shows a compositional bias: low complexity. A disordered region spans residues 1-32 (MESASSSLATSGRRRSSSGGGGGSWGSIGSAA). At 1–198 (MESASSSLAT…FLWDACKDLT (198 aa)) the chain is on the cytoplasmic side. A helical membrane pass occupies residues 199-219 (LIILMVAAAVSLALGITTEGI). At 220-221 (KE) the chain is on the extracellular side. The chain crosses the membrane as a helical span at residues 222 to 242 (GWYDGASIAFAVLLVVVVTAT). Over 243–338 (SDYKQSLQFQ…MSGCKVADGY (96 aa)) the chain is Cytoplasmic. The chain crosses the membrane as a helical span at residues 339-359 (GTMLVTAVGINTEWGLLMASI). Topologically, residues 360-375 (SEDSGEETPLQVRLNG) are extracellular. Residues 376-396 (VATFIGMVGLSVALAVLVVLL) traverse the membrane as a helical segment. The Cytoplasmic segment spans residues 397–425 (ARYFTGHTYNPDGSVQYVKGKMGVGQTIR). The chain crosses the membrane as a helical span at residues 426 to 446 (GIVGIFTVAVTIVVVAVPEGL). The Extracellular segment spans residues 447–851 (PLAVTLTLAF…GRSVYANIQK (405 aa)). Aspartate 486 functions as the 4-aspartylphosphate intermediate in the catalytic mechanism. N-linked (GlcNAc...) asparagine glycans are attached at residues asparagine 532, asparagine 569, and asparagine 737. Residues aspartate 794 and aspartate 798 each coordinate Mg(2+). Residues 852–872 (FIQFQLTVNVAALIINVVAAV) traverse the membrane as a helical segment. Residues 873–880 (SSGNVPLN) are Cytoplasmic-facing. Residues 881–901 (AVQLLWVNLIMDTLGALALAT) form a helical membrane-spanning segment. Residues 902–919 (EPPTDHLMQRPPVGRREP) are Extracellular-facing. The helical transmembrane segment at 920–940 (LITNVMWRNLIIMALFQVIVL) threads the bilayer. The Cytoplasmic segment spans residues 941 to 1000 (LTLNFRGTSLLQLKNDNQAHADKVKNTFIFNTFVLCQVFNEFNARKPDELNIFKGITGNH). The helical transmembrane segment at 1001–1021 (LFMAIVAITVVLQALIVEFLG) threads the bilayer. The Extracellular portion of the chain corresponds to 1022-1030 (KFTSTTRLT). Residues 1031–1051 (WQLWLVSIGLAFFSWPLAFVG) traverse the membrane as a helical segment. The Cytoplasmic portion of the chain corresponds to 1052-1088 (KLIPVPERPLGDFFACCCPGSKQAADAKGDDADHSDV).

This sequence belongs to the cation transport ATPase (P-type) (TC 3.A.3) family. Type IIB subfamily. In terms of assembly, interacts with NOH1.

It is found in the cell membrane. The catalysed reaction is Ca(2+)(in) + ATP + H2O = Ca(2+)(out) + ADP + phosphate + H(+). Its activity is regulated as follows. Activated by calmodulin. Its function is as follows. This magnesium-dependent enzyme catalyzes the hydrolysis of ATP coupled with the translocation of calcium from the cytosol out of the cell, into the endoplasmic reticulum, or into organelles. Involved in salt and drought stress tolerance. Involved in cold stress tolerance. The protein is Calcium-transporting ATPase 5, plasma membrane-type of Oryza sativa subsp. japonica (Rice).